We begin with the raw amino-acid sequence, 206 residues long: MKIVIASCHGYKIRETKTFLKQLGSFDIFSLTDFPNYSAPKEIGCLPEENALAKGLHAAKELNSWVIADDTMLMVPALNGLPGKLSATFAGEDACDKDHRKKLLQEMQSLESIVDRSAYFECCIVLASPEGKFFKARGICEGYISNQEKGSSGFGYDSLFLKYDYKQTFAELSEDVKNQVSHRAKALQKLAPYLQNLLEKQLVSRN.

7–12 contributes to the substrate binding site; that stretch reads SCHGYK. Asp70 (proton acceptor) is an active-site residue. Asp70 is a Mg(2+) binding site. Substrate contacts are provided by residues Thr71, 154 to 157, Lys177, and 182 to 183; these read FGYD and HR.

Belongs to the HAM1 NTPase family. As to quaternary structure, homodimer. Mg(2+) serves as cofactor.

The enzyme catalyses XTP + H2O = XMP + diphosphate + H(+). The catalysed reaction is dITP + H2O = dIMP + diphosphate + H(+). It carries out the reaction ITP + H2O = IMP + diphosphate + H(+). Its function is as follows. Pyrophosphatase that catalyzes the hydrolysis of nucleoside triphosphates to their monophosphate derivatives, with a high preference for the non-canonical purine nucleotides XTP (xanthosine triphosphate), dITP (deoxyinosine triphosphate) and ITP. Seems to function as a house-cleaning enzyme that removes non-canonical purine nucleotides from the nucleotide pool, thus preventing their incorporation into DNA/RNA and avoiding chromosomal lesions. The sequence is that of dITP/XTP pyrophosphatase from Chlamydia caviae (strain ATCC VR-813 / DSM 19441 / 03DC25 / GPIC) (Chlamydophila caviae).